The primary structure comprises 313 residues: D-alanine--D-alanine ligase (313 aa).

One can recognise an ATP-grasp domain in the interval 114–309 (KWLWKGVGLP…FSKLVLKLIS (196 aa)). 142–195 (DLTFPVIVKPSHEGSSIGMRKVDTLDALQEAVDFAQQYDSEILIEQWITGREFT) serves as a coordination point for ATP. Mg(2+) is bound by residues Asp263, Glu276, and Asn278.

The protein belongs to the D-alanine--D-alanine ligase family. The cofactor is Mg(2+). Mn(2+) serves as cofactor.

It localises to the cytoplasm. The catalysed reaction is 2 D-alanine + ATP = D-alanyl-D-alanine + ADP + phosphate + H(+). It participates in cell wall biogenesis; peptidoglycan biosynthesis. In terms of biological role, cell wall formation. This Hydrogenovibrio crunogenus (strain DSM 25203 / XCL-2) (Thiomicrospira crunogena) protein is D-alanine--D-alanine ligase.